We begin with the raw amino-acid sequence, 375 residues long: Alcohol dehydrogenase 1 (375 aa).

An N-acetylserine modification is found at S1. Positions 46, 67, 97, 100, 103, 111, and 174 each coordinate Zn(2+). NAD(+) is bound by residues 199 to 204 (GLGGVG), D223, K228, 293 to 295 (VGV), and R370.

It belongs to the zinc-containing alcohol dehydrogenase family. Class-I subfamily. In terms of assembly, homodimer. Zn(2+) is required as a cofactor.

Its subcellular location is the cytoplasm. It catalyses the reaction a primary alcohol + NAD(+) = an aldehyde + NADH + H(+). It carries out the reaction a secondary alcohol + NAD(+) = a ketone + NADH + H(+). In Naja naja (Indian cobra), this protein is Alcohol dehydrogenase 1.